The primary structure comprises 142 residues: Cell division protein SepF (142 aa).

Belongs to the SepF family. As to quaternary structure, homodimer. Interacts with FtsZ.

Its subcellular location is the cytoplasm. Functionally, cell division protein that is part of the divisome complex and is recruited early to the Z-ring. Probably stimulates Z-ring formation, perhaps through the cross-linking of FtsZ protofilaments. Its function overlaps with FtsA. The protein is Cell division protein SepF of Syntrophomonas wolfei subsp. wolfei (strain DSM 2245B / Goettingen).